A 1070-amino-acid polypeptide reads, in one-letter code: RecBCD enzyme subunit RecC (1070 aa).

Belongs to the RecC family. Heterotrimer of RecB, RecC and RecD. All subunits contribute to DNA-binding.

In terms of biological role, a helicase/nuclease that prepares dsDNA breaks (DSB) for recombinational DNA repair. Binds to DSBs and unwinds DNA via a highly rapid and processive ATP-dependent bidirectional helicase activity. Unwinds dsDNA until it encounters a Chi (crossover hotspot instigator) sequence from the 3' direction. Cuts ssDNA a few nucleotides 3' to the Chi site. The properties and activities of the enzyme are changed at Chi. The Chi-altered holoenzyme produces a long 3'-ssDNA overhang and facilitates RecA-binding to the ssDNA for homologous DNA recombination and repair. Holoenzyme degrades any linearized DNA that is unable to undergo homologous recombination. In the holoenzyme this subunit recognizes the wild-type Chi sequence, and when added to isolated RecB increases its ATP-dependent helicase processivity. This chain is RecBCD enzyme subunit RecC, found in Buchnera aphidicola subsp. Acyrthosiphon pisum (strain APS) (Acyrthosiphon pisum symbiotic bacterium).